The chain runs to 545 residues: Phenylalanine--tRNA ligase beta subunit (545 aa).

Positions 268–343 (FLHKIQNVRE…MSIGYNNLEP (76 aa)) constitute a B5 domain. Residues Asp321, Asp327, Glu330, and Asp331 each coordinate Mg(2+).

This sequence belongs to the phenylalanyl-tRNA synthetase beta subunit family. Type 2 subfamily. In terms of assembly, tetramer of two alpha and two beta subunits. Mg(2+) serves as cofactor.

The protein resides in the cytoplasm. It catalyses the reaction tRNA(Phe) + L-phenylalanine + ATP = L-phenylalanyl-tRNA(Phe) + AMP + diphosphate + H(+). In Saccharolobus islandicus (strain Y.N.15.51 / Yellowstone #2) (Sulfolobus islandicus), this protein is Phenylalanine--tRNA ligase beta subunit.